A 618-amino-acid polypeptide reads, in one-letter code: tRNA endonuclease vms-1 (618 aa).

Residues 59 to 85 (DQCTTCNCPVDFGDRAVLLEHYQSLFH) form a C2H2-type zinc finger. A VLRF1 domain is found at 170-311 (RPFDCAIFLW…SDCWQRLQQV (142 aa)). The active site involves Q213. 2 ANK repeats span residues 437–466 (NRSTFLHVSAANDARKCLKYFLEEVNCDSS) and 470–496 (GAGLPPYSSSANSDVKSIFIDYRVKNE). The segment at 502–539 (ARTHIPEPKKKVELTEEQEREQAERKKEKKARQKEKEK) is disordered. Positions 505–515 (HIPEPKKKVEL) are enriched in basic and acidic residues. Residues 510–557 (KKKVELTEEQEREQAERKKEKKARQKEKEKLKKEIAKRDVEEMEERQK) adopt a coiled-coil conformation.

This sequence belongs to the ANKZF1/VMS1 family. As to expression, in larval stages and in adults, expressed in intestinal cells, specific neurons in the head and the tail, and in the ventral nerve cord.

It localises to the cytoplasm. It is found in the mitochondrion. Functionally, endonuclease that cleaves polypeptidyl-tRNAs downstream of the ribosome-associated quality control (RQC) pathway to release incompletely synthesized polypeptides for degradation. The RQC pathway disassembles aberrantly stalled translation complexes to recycle or degrade the constituent parts. Dispensable for viability and growth but is required for protection against oxidative stress and for wild-type life span. The protein is tRNA endonuclease vms-1 (vms-1) of Caenorhabditis elegans.